Consider the following 442-residue polypeptide: Protein translocase subunit SecF (442 aa).

The disordered stretch occupies residues 1–39; sequence MASKAKTGRDDEATSAVELTEATESAVARTDGDSTTDTA. 6 helical membrane-spanning segments follow: residues 67-87, 187-207, 218-238, 243-263, 301-321, and 331-351; these read WFGVSGAIVAVAIASIVFRGF, ITKKAVIALVVFLVLVALYIT, AITAMLFDLTVTAGVYSLVGF, ATVIGLLTILGFSLYDTVIVF, LIGVLPVLALMLVAVWLLGVG, and LIGIIIGTYSSIFFATPLLVT. Residues 366–442 are disordered; sequence VLKRRNSGSP…PTGKRNAGRR (77 aa). A compositionally biased stretch (low complexity) spans 402–432; it reads QASSQSAPRAAQGSSKPAPGARPVRPVGTRR. Basic residues predominate over residues 433 to 442; that stretch reads PTGKRNAGRR.

Belongs to the SecD/SecF family. SecF subfamily. In terms of assembly, forms a complex with SecD. Part of the essential Sec protein translocation apparatus which comprises SecA, SecYEG and auxiliary proteins SecDF. Other proteins may also be involved.

The protein resides in the cell membrane. Functionally, part of the Sec protein translocase complex. Interacts with the SecYEG preprotein conducting channel. SecDF uses the proton motive force (PMF) to complete protein translocation after the ATP-dependent function of SecA. This is Protein translocase subunit SecF from Mycobacterium tuberculosis (strain CDC 1551 / Oshkosh).